The sequence spans 465 residues: MKAFMGDDFLLNSKTAVKLYREYAENMPIIDYHCHLSPKEIYENKTFATITEAWLYGDHYKWRIMRANGIEERCITGNASDEEKFFAWAKTVPMAIGNPLYSWTHLELQRWFGIYDVLNEKTAAAIWKKTNELLQGDGFGARDLILKSNVKVICTTDDPADALTYHELLKESDFPVQVLPGFRPDKGLDISSPGFADWVRSLESASGMAVSSYQSYLDALESRVRFFHNAGGRVSDHALDQMVYAETTEEEAARIFAAGLSGEHVSFEDEKKFKTRTLQYLCGLYAELDWAMQFHINALRNTNTNKFSSLGPDTGYDSINDERIAKPLARLLDSAEKKRQLPKTILYSLNPNDNYIIASMINSFQDGKTPGKIQFGTAWWFNDTKDGMLQQMRALSNMGLFSRFIGMLTDSRSFLSYPRHEYFRRLVCTLIGGWAEQGEAPYDMELLGKIVEGICYRNAEEYFRF.

Belongs to the metallo-dependent hydrolases superfamily. Uronate isomerase family.

It carries out the reaction D-glucuronate = D-fructuronate. The enzyme catalyses aldehydo-D-galacturonate = keto-D-tagaturonate. Its pathway is carbohydrate metabolism; pentose and glucuronate interconversion. The protein is Uronate isomerase of Bacillus velezensis (strain DSM 23117 / BGSC 10A6 / LMG 26770 / FZB42) (Bacillus amyloliquefaciens subsp. plantarum).